Reading from the N-terminus, the 92-residue chain is PqqA binding protein (92 aa).

It belongs to the PqqD family. Monomer. Interacts with PqqE.

Its pathway is cofactor biosynthesis; pyrroloquinoline quinone biosynthesis. Its function is as follows. Functions as a PqqA binding protein and presents PqqA to PqqE, in the pyrroloquinoline quinone (PQQ) biosynthetic pathway. The chain is PqqA binding protein from Xanthomonas oryzae pv. oryzae (strain PXO99A).